A 429-amino-acid polypeptide reads, in one-letter code: Adenylosuccinate synthetase (429 aa).

Residues 12-18 (GDEGKGK) and 40-42 (GHT) each bind GTP. D13 acts as the Proton acceptor in catalysis. D13 and G40 together coordinate Mg(2+). IMP is bound by residues 13–16 (DEGK), 38–41 (NAGH), T128, R142, Q223, T238, and R302. H41 serves as the catalytic Proton donor. 298–304 (VNTGRKR) serves as a coordination point for substrate. Residues R304, 330–332 (KLD), and 412–414 (GVG) contribute to the GTP site.

Belongs to the adenylosuccinate synthetase family. In terms of assembly, homodimer. The cofactor is Mg(2+).

Its subcellular location is the cytoplasm. It catalyses the reaction IMP + L-aspartate + GTP = N(6)-(1,2-dicarboxyethyl)-AMP + GDP + phosphate + 2 H(+). The protein operates within purine metabolism; AMP biosynthesis via de novo pathway; AMP from IMP: step 1/2. Its function is as follows. Plays an important role in the de novo pathway of purine nucleotide biosynthesis. Catalyzes the first committed step in the biosynthesis of AMP from IMP. This chain is Adenylosuccinate synthetase, found in Corynebacterium diphtheriae (strain ATCC 700971 / NCTC 13129 / Biotype gravis).